A 177-amino-acid chain; its full sequence is NAD(P)H-quinone oxidoreductase subunit 6, chloroplastic (177 aa).

A run of 5 helical transmembrane segments spans residues 10–30 (ILLVSLGSGLIVGGLGVVLLT), 32–52 (PIYSAFSLGLVLVCISLFYIP), 61–81 (AQLLIYVGAINVLILFAVMFM), 92–112 (FWTVGDGFTSLVCTSIFFSLI), and 152–172 (FYLPFELISIILLVSLVGAIA).

It belongs to the complex I subunit 6 family. NDH is composed of at least 16 different subunits, 5 of which are encoded in the nucleus.

It is found in the plastid. The protein resides in the chloroplast thylakoid membrane. The enzyme catalyses a plastoquinone + NADH + (n+1) H(+)(in) = a plastoquinol + NAD(+) + n H(+)(out). It carries out the reaction a plastoquinone + NADPH + (n+1) H(+)(in) = a plastoquinol + NADP(+) + n H(+)(out). NDH shuttles electrons from NAD(P)H:plastoquinone, via FMN and iron-sulfur (Fe-S) centers, to quinones in the photosynthetic chain and possibly in a chloroplast respiratory chain. The immediate electron acceptor for the enzyme in this species is believed to be plastoquinone. Couples the redox reaction to proton translocation, and thus conserves the redox energy in a proton gradient. This chain is NAD(P)H-quinone oxidoreductase subunit 6, chloroplastic (ndhG), found in Nymphaea alba (White water-lily).